The chain runs to 493 residues: Alpha-amylase-related protein (493 aa).

A signal peptide spans 1 to 19 (MFKFALALTLCLAGSLSLA). Glutamine 20 is subject to Pyrrolidone carboxylic acid. An intrachain disulfide couples cysteine 47 to cysteine 103. The Ca(2+) site is built by asparagine 117, glutamine 168, and aspartate 177. The cysteines at positions 156 and 170 are disulfide-linked. Arginine 205 contacts chloride. Aspartate 207 acts as the Nucleophile in catalysis. Histidine 211 provides a ligand contact to Ca(2+). Residue glutamate 244 is the Proton donor of the active site. Residues asparagine 307 and arginine 342 each contribute to the chloride site. 3 disulfide bridges follow: cysteine 375-cysteine 381, cysteine 417-cysteine 440, and cysteine 447-cysteine 459.

Belongs to the glycosyl hydrolase 13 family. As to quaternary structure, monomer. Ca(2+) serves as cofactor. The cofactor is chloride.

The protein localises to the secreted. It catalyses the reaction Endohydrolysis of (1-&gt;4)-alpha-D-glucosidic linkages in polysaccharides containing three or more (1-&gt;4)-alpha-linked D-glucose units.. This Drosophila elegans (Fruit fly) protein is Alpha-amylase-related protein (Amyrel).